A 383-amino-acid polypeptide reads, in one-letter code: Protein delta homolog 2 (383 aa).

The N-terminal stretch at 1 to 26 is a signal peptide; that stretch reads MPSGCRCLHLVCLLCILGAPVKPARG. EGF-like domains lie at 27-58, 62-89, 91-129, and 131-172; these read NDCS…LHCE, RMPG…KFCD, DEHI…RDCE, and KAGP…ARCE. Residues 27–306 are Extracellular-facing; the sequence is NDCSSLCDLA…RQEAGLGEPS (280 aa). 17 disulfides stabilise this stretch: Cys-29-Cys-40, Cys-33-Cys-46, Cys-48-Cys-57, Cys-66-Cys-71, Cys-79-Cys-88, Cys-95-Cys-107, Cys-101-Cys-117, Cys-119-Cys-128, Cys-135-Cys-148, Cys-142-Cys-160, Cys-162-Cys-171, Cys-178-Cys-189, Cys-183-Cys-198, Cys-200-Cys-209, Cys-216-Cys-227, Cys-221-Cys-236, and Cys-238-Cys-247. N-linked (GlcNAc...) asparagine glycosylation occurs at Asn-157. One can recognise an EGF-like 5; calcium-binding domain in the interval 174–210; that stretch reads NVDDCLMRPCANGATCLDGINRFSCLCPEGFTGRFCT. Residues 212–248 form the EGF-like 6; calcium-binding domain; sequence NLDDCASRPCQRGARCRDRVHDFDCLCPSGYGGKTCE. A helical membrane pass occupies residues 307 to 327; that stretch reads LVAVVVFGAVTAALVLSTVLL. Residues 328–383 lie on the Cytoplasmic side of the membrane; the sequence is TLRAWRRGFCPPGPCCYPAPHYAPARQDQECQVSMLPTGLPLPPDLPPEPGKTTAL. The interval 364 to 383 is disordered; that stretch reads PTGLPLPPDLPPEPGKTTAL. Over residues 367-377 the composition is skewed to pro residues; that stretch reads LPLPPDLPPEP.

The protein localises to the membrane. In terms of biological role, regulates adipogenesis. This is Protein delta homolog 2 (DLK2) from Bos taurus (Bovine).